Consider the following 73-residue polypeptide: Large ribosomal subunit protein bL31 (73 aa).

4 residues coordinate Zn(2+): C16, C18, C37, and C40.

It belongs to the bacterial ribosomal protein bL31 family. Type A subfamily. Part of the 50S ribosomal subunit. Zn(2+) is required as a cofactor.

In terms of biological role, binds the 23S rRNA. The chain is Large ribosomal subunit protein bL31 from Pseudomonas savastanoi pv. phaseolicola (strain 1448A / Race 6) (Pseudomonas syringae pv. phaseolicola (strain 1448A / Race 6)).